The following is a 2178-amino-acid chain: DNA-directed RNA polymerase subunit beta (2178 aa).

3 insert regions span residues 269–325, 714–1508, and 1703–1900; these read SKKI…TPFV, KRID…LFYN, and KGND…LQPM.

The protein belongs to the RNA polymerase beta chain family. In terms of assembly, in plastids the minimal PEP RNA polymerase catalytic core is composed of four subunits: alpha, beta, beta', and beta''. When a (nuclear-encoded) sigma factor is associated with the core the holoenzyme is formed, which can initiate transcription.

The protein localises to the plastid. It localises to the chloroplast. The enzyme catalyses RNA(n) + a ribonucleoside 5'-triphosphate = RNA(n+1) + diphosphate. Its function is as follows. DNA-dependent RNA polymerase catalyzes the transcription of DNA into RNA using the four ribonucleoside triphosphates as substrates. The sequence is that of DNA-directed RNA polymerase subunit beta from Tupiella akineta (Green alga).